Consider the following 291-residue polypeptide: Elongation factor Ts (291 aa).

The involved in Mg(2+) ion dislocation from EF-Tu stretch occupies residues 84-87; sequence TDFV.

Belongs to the EF-Ts family.

It localises to the cytoplasm. Associates with the EF-Tu.GDP complex and induces the exchange of GDP to GTP. It remains bound to the aminoacyl-tRNA.EF-Tu.GTP complex up to the GTP hydrolysis stage on the ribosome. This chain is Elongation factor Ts, found in Bifidobacterium adolescentis (strain ATCC 15703 / DSM 20083 / NCTC 11814 / E194a).